The sequence spans 657 residues: uncharacterized protein (657 aa).

Active-site charge relay system residues include Ser518 and His631.

Belongs to the peptidase S9C family.

This is an uncharacterized protein from Bacillus subtilis (strain 168).